Here is a 209-residue protein sequence, read N- to C-terminus: Protein lin-28 homolog A (209 aa).

The interval 1–31 (MGSVSNQQFAGGCAKAAEKAPEEAPPDAARA) is disordered. Glycine 2 is subject to N-acetylglycine. Residue serine 3 is modified to Phosphoserine. The CSD domain maps to 39 to 112 (HGAGICKWFN…GLESIRVTGP (74 aa)). A flexible linker region spans residues 113–136 (GGVFCIGSERRPKGKNMQKRRSKG). Serine 120 carries the phosphoserine modification. CCHC-type zinc fingers lie at residues 137–154 (DRCYNCGGLDHHAKECKL) and 159–176 (KKCHFCQSINHMVASCPL). Positions 177–209 (KAQQGPSSQGKPAYFREEEEEIHSPALLPEAQN) are disordered. At serine 200 the chain carries Phosphoserine.

It belongs to the lin-28 family. In terms of assembly, monomer. During skeletal muscle differentiation, associated with translation initiation complexes in the polysomal compartment. Directly interacts with EIF3S2. Interacts with NCL in an RNA-dependent manner. Interacts with TUT4 in the presence of pre-let-7 RNA. In terms of tissue distribution, expressed in embryonic stem cells (ES cells), spermatagonia and testis. Expressed in numerous epithelial tissues including the epithelia of the small intestine, the intralobular duct epithelium of the mammary gland and the epithelia of Henle's loop in the kidney and in the collecting duct (at protein level). Also expressed in the myocardium and skeletal muscle (at protein level).

The protein resides in the cytoplasm. The protein localises to the rough endoplasmic reticulum. It is found in the P-body. It localises to the stress granule. Its subcellular location is the nucleus. The protein resides in the nucleolus. RNA-binding protein that inhibits processing of pre-let-7 miRNAs and regulates translation of mRNAs that control developmental timing, pluripotency and metabolism. Seems to recognize a common structural G-quartet (G4) feature in its miRNA and mRNA targets. 'Translational enhancer' that drives specific mRNAs to polysomes and increases the efficiency of protein synthesis. Its association with the translational machinery and target mRNAs results in an increased number of initiation events per molecule of mRNA and, indirectly, in mRNA stabilization. Binds IGF2 mRNA, MYOD1 mRNA, ARBP/36B4 ribosomal protein mRNA and its own mRNA. Essential for skeletal muscle differentiation program through the translational up-regulation of IGF2 expression. Suppressor of microRNA (miRNA) biogenesis, including that of let-7, miR107, miR-143 and miR-200c. Specifically binds the miRNA precursors (pre-miRNAs), recognizing an 5'-GGAG-3' motif found in pre-miRNA terminal loop, and recruits TUT4 and TUT7 uridylyltransferaseS. This results in the terminal uridylation of target pre-miRNAs. Uridylated pre-miRNAs fail to be processed by Dicer and undergo degradation. The repression of let-7 expression is required for normal development and contributes to maintain the pluripotent state by preventing let-7-mediated differentiation of embryonic stem cells. Localized to the periendoplasmic reticulum area, binds to a large number of spliced mRNAs and inhibits the translation of mRNAs destined for the ER, reducing the synthesis of transmembrane proteins, ER or Golgi lumen proteins, and secretory proteins. Binds to and enhances the translation of mRNAs for several metabolic enzymes, such as PFKP, PDHA1 or SDHA, increasing glycolysis and oxidative phosphorylation. Which, with the let-7 repression may enhance tissue repair in adult tissue. In Mus musculus (Mouse), this protein is Protein lin-28 homolog A (Lin28a).